We begin with the raw amino-acid sequence, 338 residues long: D-erythrose-4-phosphate dehydrogenase (338 aa).

12–13 (RI) lines the NAD(+) pocket. Substrate is bound by residues 154-156 (SCT), Arg-200, 213-214 (TK), and Arg-236. Residue Cys-155 is the Nucleophile of the active site. Asn-318 contacts NAD(+).

This sequence belongs to the glyceraldehyde-3-phosphate dehydrogenase family. Epd subfamily. Homotetramer.

It is found in the cytoplasm. The catalysed reaction is D-erythrose 4-phosphate + NAD(+) + H2O = 4-phospho-D-erythronate + NADH + 2 H(+). It functions in the pathway cofactor biosynthesis; pyridoxine 5'-phosphate biosynthesis; pyridoxine 5'-phosphate from D-erythrose 4-phosphate: step 1/5. In terms of biological role, catalyzes the NAD-dependent conversion of D-erythrose 4-phosphate to 4-phosphoerythronate. The chain is D-erythrose-4-phosphate dehydrogenase from Yersinia enterocolitica serotype O:8 / biotype 1B (strain NCTC 13174 / 8081).